Reading from the N-terminus, the 223-residue chain is Ribosomal RNA small subunit methyltransferase G (223 aa).

S-adenosyl-L-methionine is bound by residues Gly-82, Leu-87, 133 to 134, and Arg-151; that span reads AE.

It belongs to the methyltransferase superfamily. RNA methyltransferase RsmG family.

The protein localises to the cytoplasm. Its function is as follows. Specifically methylates the N7 position of guanine in position 518 of 16S rRNA. The sequence is that of Ribosomal RNA small subunit methyltransferase G from Corynebacterium glutamicum (strain ATCC 13032 / DSM 20300 / JCM 1318 / BCRC 11384 / CCUG 27702 / LMG 3730 / NBRC 12168 / NCIMB 10025 / NRRL B-2784 / 534).